We begin with the raw amino-acid sequence, 226 residues long: Large ribosomal subunit protein uL1 (226 aa).

The protein belongs to the universal ribosomal protein uL1 family. Part of the 50S ribosomal subunit.

Its function is as follows. Binds directly to 23S rRNA. The L1 stalk is quite mobile in the ribosome, and is involved in E site tRNA release. Protein L1 is also a translational repressor protein, it controls the translation of the L11 operon by binding to its mRNA. This Mycoplasma mycoides subsp. mycoides SC (strain CCUG 32753 / NCTC 10114 / PG1) protein is Large ribosomal subunit protein uL1.